The primary structure comprises 1207 residues: Putative coatomer subunit alpha (1207 aa).

WD repeat units follow at residues 9–50, 51–90, 93–134, 135–174, 210–249, 254–293, 296–336, and 370–411; these read SRSS…DRFD, GHDG…LLFS, GHMD…AILT, GHSH…MKNA, GHDR…AWEV, GHFN…AVQT, RDND…HALN, and SAWL…NSLP. Ser-409 and Ser-942 each carry phosphoserine.

Oligomeric complex that consists of at least the alpha, beta, beta', gamma, delta, epsilon and zeta subunits.

Its subcellular location is the cytoplasm. It is found in the golgi apparatus membrane. In terms of biological role, the coatomer is a cytosolic protein complex that binds to dilysine motifs and reversibly associates with Golgi non-clathrin-coated vesicles, which further mediate biosynthetic protein transport from the ER, via the Golgi up to the trans Golgi network. Coatomer complex is required for budding from Golgi membranes, and is essential for the retrograde Golgi-to-ER transport of dilysine-tagged proteins. This is Putative coatomer subunit alpha from Schizosaccharomyces pombe (strain 972 / ATCC 24843) (Fission yeast).